The following is a 378-amino-acid chain: Microtubule-associated protein 6 homolog (378 aa).

Positions 36 to 111 (VTDGAQPPPP…YQPSEAPLER (76 aa)) are disordered. The segment covering 52-62 (IETQPSLSDPY) has biased composition (polar residues). Mn stretches follow at residues 79 to 99 (SVMR…CKPR) and 112 to 135 (ETQY…WIPK). 4 stretches are compositionally biased toward basic and acidic residues: residues 203-220 (KRES…RATR), 242-252 (NEFRPWTDVKP), 265-274 (PEEKVVHETS), and 306-315 (PSKESSKVEK). The disordered stretch occupies residues 203–378 (KRESFMPKLP…INNKLAEAKE (176 aa)). The tract at residues 237–260 (GTSYRNEFRPWTDVKPVKPIKAKS) is mn 3. Residues 322-337 (KPKKTSTSHKPVKKAK) show a composition bias toward basic residues. Residues 359–378 (KPEEKEKSKEINNKLAEAKE) show a composition bias toward basic and acidic residues.

This sequence belongs to the STOP family.

The protein localises to the cytoplasm. It localises to the cytoskeleton. In terms of biological role, involved in microtubule stabilization in many cell types, including neuronal cells. Specifically has microtubule cold stabilizing activity. Involved in dendrite morphogenesis and maintenance by regulating lysosomal trafficking. In Xenopus tropicalis (Western clawed frog), this protein is Microtubule-associated protein 6 homolog (map6).